A 266-amino-acid chain; its full sequence is Putative pyruvate, phosphate dikinase regulatory protein (266 aa).

ADP is bound at residue 147–154; it reads GLSRTSKT.

Belongs to the pyruvate, phosphate/water dikinase regulatory protein family. PDRP subfamily.

It catalyses the reaction N(tele)-phospho-L-histidyl/L-threonyl-[pyruvate, phosphate dikinase] + ADP = N(tele)-phospho-L-histidyl/O-phospho-L-threonyl-[pyruvate, phosphate dikinase] + AMP + H(+). It carries out the reaction N(tele)-phospho-L-histidyl/O-phospho-L-threonyl-[pyruvate, phosphate dikinase] + phosphate + H(+) = N(tele)-phospho-L-histidyl/L-threonyl-[pyruvate, phosphate dikinase] + diphosphate. Its function is as follows. Bifunctional serine/threonine kinase and phosphorylase involved in the regulation of the pyruvate, phosphate dikinase (PPDK) by catalyzing its phosphorylation/dephosphorylation. This chain is Putative pyruvate, phosphate dikinase regulatory protein, found in Clostridium perfringens (strain 13 / Type A).